We begin with the raw amino-acid sequence, 445 residues long: MAVAIAAARVWRPNRGLSQAALLLLWRPGARGLARSHPHRQQQQFSSLDDKPQFPGASAEFIDKLEFIQPNVISGIPIYRVMDRQGQIINPSEDPHLPKEKVLKLYKSMTLLNTMDRILYESQRQGRISFYMTNYGEEGTHVGSAAALDNTDLVFGQYREAGVLMYRDYPLELFMAQCYGNISDLGKGRQMPVHYGCKERHFVTISSPLATQIPQAVGAAYAAKRANANRVVICYFGEGAASEGDAHAGFNFAATLECPIIFFCRNNGYAISTPTSEQYRGDGIAARGPGYGIMSIRVDGNDVFAVYNATKEARRRAVAENQPFLIEAMTYRIGHHSTSDDSSAYRSVDEVNYWDKQDHPISRLRHYLLSQGWWDEEQEKAWRKQSRKKVMKAFEQAERKPKPNPNLLFSDVYQEMPAQLRKQQESLARHLQTYGEHYPLEHFDK.

The transit peptide at M1–F45 directs the protein to the mitochondrion. Residues Y158 and R159 each coordinate thiamine diphosphate. A K(+)-binding site is contributed by S206. Thiamine diphosphate is bound at residue S207. K(+) is bound by residues P208, T211, and Q212. E238 serves as a coordination point for Mg(2+). 3 residues coordinate thiamine diphosphate: G239, A240, and R265. Mg(2+) is bound by residues N267 and Y269. H336 is a thiamine diphosphate binding site. A Phosphoserine; by BCKDK modification is found at S337. Phosphothreonine is present on T338. A phosphoserine mark is found at S339 and S347. K356 carries the N6-acetyllysine; alternate modification. Position 356 is an N6-succinyllysine; alternate (K356). K380 is subject to N6-succinyllysine.

This sequence belongs to the BCKDHA family. In terms of assembly, heterotetramer of 2 alpha/BCKDHA and 2 beta chains/BCKDHB that forms the branched-chain alpha-keto acid decarboxylase (E1) component of the BCKD complex. The branched-chain alpha-ketoacid dehydrogenase is a large complex composed of three major building blocks E1, E2 and E3. It is organized around E2, a 24-meric cubic core composed of DBT, to which are associated 6 to 12 copies of E1, and approximately 6 copies of the dehydrogenase E3, a DLD dimer. Interacts with PPM1K. The cofactor is thiamine diphosphate. Mg(2+) is required as a cofactor. Phosphorylated at Ser-337 by BCKDK and dephosphorylated by protein phosphatase PPM1K.

It is found in the mitochondrion matrix. It catalyses the reaction N(6)-[(R)-lipoyl]-L-lysyl-[protein] + 3-methyl-2-oxobutanoate + H(+) = N(6)-[(R)-S(8)-2-methylpropanoyldihydrolipoyl]-L-lysyl-[protein] + CO2. In terms of biological role, together with BCKDHB forms the heterotetrameric E1 subunit of the mitochondrial branched-chain alpha-ketoacid dehydrogenase (BCKD) complex. The BCKD complex catalyzes the multi-step oxidative decarboxylation of alpha-ketoacids derived from the branched-chain amino-acids valine, leucine and isoleucine producing CO2 and acyl-CoA which is subsequently utilized to produce energy. The E1 subunit catalyzes the first step with the decarboxylation of the alpha-ketoacid forming an enzyme-product intermediate. A reductive acylation mediated by the lipoylamide cofactor of E2 extracts the acyl group from the E1 active site for the next step of the reaction. This Macaca fascicularis (Crab-eating macaque) protein is 2-oxoisovalerate dehydrogenase subunit alpha, mitochondrial (BCKDHA).